The primary structure comprises 202 residues: Nuclear transcription factor Y subunit C-6 (202 aa).

Over residues 1 to 16 (MAENNNNNGDNMNNDN) the composition is skewed to low complexity. Disordered stretches follow at residues 1-29 (MAENNNNNGDNMNNDNHQQPPSYSQLPPM) and 180-202 (AWPAAAGDGEDDAEDNGGNGGGN). Residues 17–29 (HQQPPSYSQLPPM) show a composition bias toward polar residues.

It belongs to the NFYC/HAP5 subunit family. As to quaternary structure, heterotrimeric transcription factor composed of three components, NF-YA, NF-YB and NF-YC. NF-YB and NF-YC must interact and dimerize for NF-YA association and DNA binding. Expressed in flowers and siliques.

It is found in the nucleus. Stimulates the transcription of various genes by recognizing and binding to a CCAAT motif in promoters. This Arabidopsis thaliana (Mouse-ear cress) protein is Nuclear transcription factor Y subunit C-6 (NFYC6).